The primary structure comprises 122 residues: Large ribosomal subunit protein uL24 (122 aa).

The tract at residues 43–64 is disordered; sequence IRKHHRRDMPTPQGGTTKGGII.

It belongs to the universal ribosomal protein uL24 family. In terms of assembly, part of the 50S ribosomal subunit.

One of two assembly initiator proteins, it binds directly to the 5'-end of the 23S rRNA, where it nucleates assembly of the 50S subunit. In terms of biological role, one of the proteins that surrounds the polypeptide exit tunnel on the outside of the subunit. This Cutibacterium acnes (strain DSM 16379 / KPA171202) (Propionibacterium acnes) protein is Large ribosomal subunit protein uL24.